The primary structure comprises 242 residues: DNA repair protein RecO (242 aa).

The protein belongs to the RecO family. In terms of assembly, monomer.

Functionally, involved in DNA repair and RecF pathway recombination. In Salmonella agona (strain SL483), this protein is DNA repair protein RecO.